A 363-amino-acid chain; its full sequence is Cytochrome P450 CYP82D47 (363 aa).

Cysteine 342 is a binding site for heme.

It belongs to the cytochrome P450 family. Requires heme as cofactor.

Functionally, probable heme-thiolate monooxygenase. The protein is Cytochrome P450 CYP82D47 of Panax ginseng (Korean ginseng).